A 1298-amino-acid polypeptide reads, in one-letter code: Phosphoribosylformylglycinamidine synthase (1298 aa).

The tract at residues 303-327 (FPGAATGSGGEIRDEGATGRGAKPK) is disordered. ATP contacts are provided by residues 305-316 (GAATGSGGEIRD), 384-386 (TGY), and A676. Positions 677, 716, 720, and 884 each coordinate Mg(2+). S886 serves as a coordination point for ATP. A Glutamine amidotransferase type-1 domain is found at 1045–1298 (VAVLREQGVN…MFRNARAWVN (254 aa)). C1138 serves as the catalytic Nucleophile. Active-site residues include H1263 and E1265.

The protein in the N-terminal section; belongs to the FGAMS family. As to quaternary structure, monomer.

The protein resides in the cytoplasm. The enzyme catalyses N(2)-formyl-N(1)-(5-phospho-beta-D-ribosyl)glycinamide + L-glutamine + ATP + H2O = 2-formamido-N(1)-(5-O-phospho-beta-D-ribosyl)acetamidine + L-glutamate + ADP + phosphate + H(+). It functions in the pathway purine metabolism; IMP biosynthesis via de novo pathway; 5-amino-1-(5-phospho-D-ribosyl)imidazole from N(2)-formyl-N(1)-(5-phospho-D-ribosyl)glycinamide: step 1/2. In terms of biological role, phosphoribosylformylglycinamidine synthase involved in the purines biosynthetic pathway. Catalyzes the ATP-dependent conversion of formylglycinamide ribonucleotide (FGAR) and glutamine to yield formylglycinamidine ribonucleotide (FGAM) and glutamate. The protein is Phosphoribosylformylglycinamidine synthase of Pseudomonas syringae pv. syringae (strain B728a).